We begin with the raw amino-acid sequence, 671 residues long: UvrABC system protein B (671 aa).

In terms of domain architecture, Helicase ATP-binding spans Glu25 to Arg412. Position 38–45 (Gly38–Thr45) interacts with ATP. A Beta-hairpin motif is present at residues Tyr91–Ile114. The Helicase C-terminal domain occupies Gln429–Ile582. Residues Pro601–Asn623 form a disordered region. The segment covering Ala614–Asn623 has biased composition (basic and acidic residues). The 36-residue stretch at Thr632–Arg667 folds into the UVR domain.

The protein belongs to the UvrB family. As to quaternary structure, forms a heterotetramer with UvrA during the search for lesions. Interacts with UvrC in an incision complex.

It is found in the cytoplasm. The UvrABC repair system catalyzes the recognition and processing of DNA lesions. A damage recognition complex composed of 2 UvrA and 2 UvrB subunits scans DNA for abnormalities. Upon binding of the UvrA(2)B(2) complex to a putative damaged site, the DNA wraps around one UvrB monomer. DNA wrap is dependent on ATP binding by UvrB and probably causes local melting of the DNA helix, facilitating insertion of UvrB beta-hairpin between the DNA strands. Then UvrB probes one DNA strand for the presence of a lesion. If a lesion is found the UvrA subunits dissociate and the UvrB-DNA preincision complex is formed. This complex is subsequently bound by UvrC and the second UvrB is released. If no lesion is found, the DNA wraps around the other UvrB subunit that will check the other stand for damage. The sequence is that of UvrABC system protein B from Pseudomonas fluorescens (strain ATCC BAA-477 / NRRL B-23932 / Pf-5).